The chain runs to 67 residues: Conotoxin TsMMSK-B022 (67 aa).

A signal peptide spans Met1–Ser22. Positions Leu23–Val50 are excised as a propeptide. Disulfide bonds link Cys53/Cys65, Cys54/Cys61, and Cys58/Cys64. 4-hydroxyproline is present on Pro63.

This sequence belongs to the conotoxin M superfamily. As to expression, expressed by the venom duct.

It localises to the secreted. The chain is Conotoxin TsMMSK-B022 from Conus tessulatus (Tessellate cone).